Consider the following 260-residue polypeptide: Meiotic recombination protein rec6 (260 aa).

The tract at residues 197–222 (QYSESSLLDDSQLLCSSPPVDSTEEA) is disordered. Residues 199–213 (SESSLLDDSQLLCSS) are compositionally biased toward low complexity.

It belongs to the TOP6B-like family. In terms of assembly, component of the DSB catalytic core (DSBC) complex, composed of at least rec12, rec6 and rec14. The complex interacts with mde2.

Its function is as follows. Required for formation of the rec12-mediated double-strand breaks (DSBs) that initiate meiotic recombination. May be involved primarily in the early steps of meiotic recombination. This is Meiotic recombination protein rec6 from Schizosaccharomyces pombe (strain 972 / ATCC 24843) (Fission yeast).